We begin with the raw amino-acid sequence, 209 residues long: Pyridoxal 5'-phosphate synthase subunit PdxT (209 aa).

Residue 58-60 (GES) coordinates L-glutamine. C90 acts as the Nucleophile in catalysis. L-glutamine is bound by residues R119 and 148–149 (IR). Residues H185 and E187 each act as charge relay system in the active site.

This sequence belongs to the glutaminase PdxT/SNO family. As to quaternary structure, in the presence of PdxS, forms a dodecamer of heterodimers. Only shows activity in the heterodimer.

It carries out the reaction aldehydo-D-ribose 5-phosphate + D-glyceraldehyde 3-phosphate + L-glutamine = pyridoxal 5'-phosphate + L-glutamate + phosphate + 3 H2O + H(+). The enzyme catalyses L-glutamine + H2O = L-glutamate + NH4(+). The protein operates within cofactor biosynthesis; pyridoxal 5'-phosphate biosynthesis. Functionally, catalyzes the hydrolysis of glutamine to glutamate and ammonia as part of the biosynthesis of pyridoxal 5'-phosphate. The resulting ammonia molecule is channeled to the active site of PdxS. The polypeptide is Pyridoxal 5'-phosphate synthase subunit PdxT (Clavibacter michiganensis subsp. michiganensis (strain NCPPB 382)).